Consider the following 474-residue polypeptide: Salutaridinol 7-O-acetyltransferase (474 aa).

Histidine 163 functions as the Proton acceptor in the catalytic mechanism. Positions 213–234 are disordered; that stretch reads ERLTSPSGMSEIPFSSTPEDTE. The segment covering 214–230 has biased composition (polar residues); it reads RLTSPSGMSEIPFSSTP. Residue aspartate 416 is the Proton acceptor of the active site.

The protein belongs to the plant acyltransferase family. Expressed in root, stem, leaf and capsule of the mature plant. Restricted to sieve elements of the phloem adjacent or proximal to laticifers.

It carries out the reaction (7S)-salutaridinol + acetyl-CoA = (7S)-O-acetylsalutaridinol + CoA. Its pathway is alkaloid biosynthesis; morphine biosynthesis. In terms of biological role, acetyltransferase involved in biosynthesis of morphinan-type benzylisoquinoline and opiate alkaloids natural products. Catalyzes the conversion of the phenanthrene alkaloid salutaridinol to salutaridinol-7-O-acetate, the immediate precursor of thebaine along the morphine biosynthetic pathway. Conversion of 7-O-acetylsalutaridinol into thebaine is spontaneous. This is Salutaridinol 7-O-acetyltransferase from Papaver somniferum (Opium poppy).